The primary structure comprises 93 residues: Small ribosomal subunit protein uS19 (93 aa).

Belongs to the universal ribosomal protein uS19 family.

Its function is as follows. Protein S19 forms a complex with S13 that binds strongly to the 16S ribosomal RNA. This chain is Small ribosomal subunit protein uS19, found in Helicobacter acinonychis (strain Sheeba).